We begin with the raw amino-acid sequence, 99 residues long: Small ribosomal subunit protein uS14c (99 aa).

Positions 46-66 (LQSSPRNSAPTRLHRRCSSTG) are disordered.

The protein belongs to the universal ribosomal protein uS14 family. As to quaternary structure, part of the 30S ribosomal subunit.

It localises to the plastid. Its subcellular location is the chloroplast. Its function is as follows. Binds 16S rRNA, required for the assembly of 30S particles. In Pinus thunbergii (Japanese black pine), this protein is Small ribosomal subunit protein uS14c.